The sequence spans 191 residues: MAPTLHPLIDNGITKGDPNFSGGTLRCHCRSKPVEVLLGGNVAHNHACGCSKCWKPAGSLFSVVGVIPREQVKVTANEEKLHIIDDSAVILRNACKECGVHMYGRIEKPHPFKGLDFVHVELSDQKGWQEPQFAAFVSSIIEQGFNPKGTDGVRRKFKSVGLETYDTLSPTLVDLISTWTAQQNGRLPAKL.

The 147-residue stretch at Phe20–Asp166 folds into the CENP-V/GFA domain. The Zn(2+) site is built by Cys27, Cys29, Cys48, Cys50, Cys53, Cys95, and Cys98.

It belongs to the Gfa family. Requires Zn(2+) as cofactor.

The catalysed reaction is S-(hydroxymethyl)glutathione = glutathione + formaldehyde. It functions in the pathway one-carbon metabolism; formaldehyde degradation; formate from formaldehyde (glutathione route): step 1/3. Functionally, catalyzes the condensation of formaldehyde and glutathione to S-hydroxymethylglutathione. The sequence is that of Putative glutathione-dependent formaldehyde-activating enzyme from Colletotrichum graminicola (strain M1.001 / M2 / FGSC 10212) (Maize anthracnose fungus).